The chain runs to 442 residues: F-box protein KIB2 (442 aa).

One can recognise an F-box domain in the interval 62-109 (SKQPVLVLDLLRSILERLSFVDFHRGRCISLEWYSASESCLAVKNPTS). The short motif at 236 to 243 (HKKGDENY) is the Nuclear localization signal element.

As to quaternary structure, interacts with ASK7/BIN2/SK21.

Its subcellular location is the cytoplasm. It localises to the nucleus. The protein resides in the nucleolus. Component of SCF(ASK-cullin-F-box) E3 ubiquitin ligase complexes, which may mediate the ubiquitination and subsequent proteasomal degradation of target proteins. Required for brassinosteroid (BR) signal transduction. Mediates ASK7/BIN2/SK21 inactivation both by competing with substrate binding (e.g. BZR1) and by promoting its ubiquitination and subsequent proteasomal degradation. The protein is F-box protein KIB2 of Arabidopsis thaliana (Mouse-ear cress).